Consider the following 491-residue polypeptide: Stage IV sporulation protein A (491 aa).

A Walker A motif; involved in ATP-binding motif is present at residues 23–30 (GPVRTGKS). 23–30 (GPVRTGKS) contacts ATP. A coiled-coil region spans residues 334–362 (QLLSLITRLSKVKNEYDKIESALIDAKIK).

Interacts (via Walker A motif) with SipL (via C-terminus LysM domain).

Its subcellular location is the cytoplasm. The enzyme catalyses ATP + H2O = ADP + phosphate + H(+). Functionally, ATPase. Has a role at an early stage in the morphogenesis of the spore coat and is required for proper coat localization to the forespore. This Clostridioides difficile (strain 630) (Peptoclostridium difficile) protein is Stage IV sporulation protein A.